A 211-amino-acid polypeptide reads, in one-letter code: Thiamine-phosphate synthase (211 aa).

4-amino-2-methyl-5-(diphosphooxymethyl)pyrimidine is bound by residues 37–41 (QLRIK) and Asn69. Mg(2+) contacts are provided by Asp70 and Asp89. Residue Ser108 participates in 4-amino-2-methyl-5-(diphosphooxymethyl)pyrimidine binding. 2-[(2R,5Z)-2-carboxy-4-methylthiazol-5(2H)-ylidene]ethyl phosphate is bound at residue 134–136 (TQT). Lys137 contacts 4-amino-2-methyl-5-(diphosphooxymethyl)pyrimidine. Residues Gly166 and 186–187 (VS) contribute to the 2-[(2R,5Z)-2-carboxy-4-methylthiazol-5(2H)-ylidene]ethyl phosphate site.

The protein belongs to the thiamine-phosphate synthase family. Requires Mg(2+) as cofactor.

It catalyses the reaction 2-[(2R,5Z)-2-carboxy-4-methylthiazol-5(2H)-ylidene]ethyl phosphate + 4-amino-2-methyl-5-(diphosphooxymethyl)pyrimidine + 2 H(+) = thiamine phosphate + CO2 + diphosphate. It carries out the reaction 2-(2-carboxy-4-methylthiazol-5-yl)ethyl phosphate + 4-amino-2-methyl-5-(diphosphooxymethyl)pyrimidine + 2 H(+) = thiamine phosphate + CO2 + diphosphate. The catalysed reaction is 4-methyl-5-(2-phosphooxyethyl)-thiazole + 4-amino-2-methyl-5-(diphosphooxymethyl)pyrimidine + H(+) = thiamine phosphate + diphosphate. It functions in the pathway cofactor biosynthesis; thiamine diphosphate biosynthesis; thiamine phosphate from 4-amino-2-methyl-5-diphosphomethylpyrimidine and 4-methyl-5-(2-phosphoethyl)-thiazole: step 1/1. Functionally, condenses 4-methyl-5-(beta-hydroxyethyl)thiazole monophosphate (THZ-P) and 2-methyl-4-amino-5-hydroxymethyl pyrimidine pyrophosphate (HMP-PP) to form thiamine monophosphate (TMP). This chain is Thiamine-phosphate synthase, found in Escherichia coli O9:H4 (strain HS).